Consider the following 323-residue polypeptide: Fructose-1,6-bisphosphatase class 1 (323 aa).

Mg(2+)-binding residues include E93, D114, L116, and D117. Substrate is bound by residues 117–120, N205, Y233, and K263; that span reads DGSS. Position 269 (E269) interacts with Mg(2+).

The protein belongs to the FBPase class 1 family. Homotetramer. Mg(2+) serves as cofactor.

It localises to the cytoplasm. The enzyme catalyses beta-D-fructose 1,6-bisphosphate + H2O = beta-D-fructose 6-phosphate + phosphate. It functions in the pathway carbohydrate biosynthesis; gluconeogenesis. This is Fructose-1,6-bisphosphatase class 1 from Sulfurihydrogenibium sp. (strain YO3AOP1).